Reading from the N-terminus, the 1383-residue chain is DNA-directed RNA polymerase subunit beta'' (1383 aa).

Residues Cys-220, Cys-289, Cys-296, and Cys-299 each coordinate Zn(2+).

It belongs to the RNA polymerase beta' chain family. RpoC2 subfamily. In plastids the minimal PEP RNA polymerase catalytic core is composed of four subunits: alpha, beta, beta', and beta''. When a (nuclear-encoded) sigma factor is associated with the core the holoenzyme is formed, which can initiate transcription. Zn(2+) is required as a cofactor.

It localises to the plastid. It is found in the chloroplast. The catalysed reaction is RNA(n) + a ribonucleoside 5'-triphosphate = RNA(n+1) + diphosphate. DNA-dependent RNA polymerase catalyzes the transcription of DNA into RNA using the four ribonucleoside triphosphates as substrates. This chain is DNA-directed RNA polymerase subunit beta'', found in Oenothera parviflora (Small-flowered evening primrose).